The chain runs to 146 residues: 3-dehydroquinate dehydratase (146 aa).

Y23 functions as the Proton acceptor in the catalytic mechanism. N74, H80, and D87 together coordinate substrate. H100 acts as the Proton donor in catalysis. Residues 101 to 102 and R111 contribute to the substrate site; that span reads IS.

It belongs to the type-II 3-dehydroquinase family. As to quaternary structure, homododecamer.

It catalyses the reaction 3-dehydroquinate = 3-dehydroshikimate + H2O. Its pathway is metabolic intermediate biosynthesis; chorismate biosynthesis; chorismate from D-erythrose 4-phosphate and phosphoenolpyruvate: step 3/7. Catalyzes a trans-dehydration via an enolate intermediate. This chain is 3-dehydroquinate dehydratase, found in Bacillus mycoides (strain KBAB4) (Bacillus weihenstephanensis).